The chain runs to 977 residues: Bifunctional glutamine synthetase adenylyltransferase/adenylyl-removing enzyme (977 aa).

The interval 1-457 is adenylyl removase; sequence MRLPLPSDLP…HFRQVIADPD (457 aa). Positions 468–977 are adenylyl transferase; that stretch reads GGEWSPLWEQ…RRIWGELGLS (510 aa).

This sequence belongs to the GlnE family. It depends on Mg(2+) as a cofactor.

It catalyses the reaction [glutamine synthetase]-O(4)-(5'-adenylyl)-L-tyrosine + phosphate = [glutamine synthetase]-L-tyrosine + ADP. The catalysed reaction is [glutamine synthetase]-L-tyrosine + ATP = [glutamine synthetase]-O(4)-(5'-adenylyl)-L-tyrosine + diphosphate. Its function is as follows. Involved in the regulation of glutamine synthetase GlnA, a key enzyme in the process to assimilate ammonia. When cellular nitrogen levels are high, the C-terminal adenylyl transferase (AT) inactivates GlnA by covalent transfer of an adenylyl group from ATP to specific tyrosine residue of GlnA, thus reducing its activity. Conversely, when nitrogen levels are low, the N-terminal adenylyl removase (AR) activates GlnA by removing the adenylyl group by phosphorolysis, increasing its activity. The regulatory region of GlnE binds the signal transduction protein PII (GlnB) which indicates the nitrogen status of the cell. The polypeptide is Bifunctional glutamine synthetase adenylyltransferase/adenylyl-removing enzyme (Pseudomonas putida (strain ATCC 47054 / DSM 6125 / CFBP 8728 / NCIMB 11950 / KT2440)).